A 515-amino-acid polypeptide reads, in one-letter code: Glucose-6-phosphate 1-dehydrogenase (515 aa).

Ala-2 carries the post-translational modification N-acetylalanine. Position 8 is a phosphoserine (Ser-8). Residue Thr-10 is modified to Phosphothreonine. Residues 38-45 (GASGDLAK) and Arg-72 contribute to the NADP(+) site. N6-acetyllysine is present on Lys-89. NADP(+) contacts are provided by Tyr-147 and Lys-171. D-glucose 6-phosphate-binding positions include Lys-171, 201–205 (HYLGK), Glu-239, and Asp-258. The residue at position 171 (Lys-171) is an N6-(2-hydroxyisobutyryl)lysine; alternate. Lys-171 bears the N6-acetyllysine; alternate mark. The Proton acceptor role is filled by His-263. NADP(+) is bound at residue Arg-357. Residues Lys-360 and Arg-365 each coordinate D-glucose 6-phosphate. Residues Lys-366, Arg-370, and Arg-393 each contribute to the NADP(+) site. Gln-395 provides a ligand contact to D-glucose 6-phosphate. Residues 401–403 (YTK) and 421–423 (DLT) contribute to the NADP(+) site. Lys-403 bears the N6-acetyllysine mark. An N6-acetyllysine modification is found at Lys-432. Arg-487 is a binding site for NADP(+). Position 497 is an N6-acetyllysine (Lys-497). 2 residues coordinate NADP(+): Tyr-503 and Trp-509. Residue Tyr-503 is modified to Phosphotyrosine.

The protein belongs to the glucose-6-phosphate dehydrogenase family. Homotetramer; dimer of dimers. Interacts with SIRT2; the interaction is enhanced by H(2)O(2) treatment. Forms a ternary complex with ALDOB and TP53; this interaction is direct. ALDOB stabilizes the complex inhibiting G6PD activity and keeping oxidative pentose phosphate metabolism in check. Post-translationally, acetylated by ELP3 at Lys-403; acetylation inhibits its homodimerization and enzyme activity. Deacetylated by SIRT2 at Lys-403; deacetylation stimulates its enzyme activity.

Its subcellular location is the cytoplasm. It is found in the cytosol. The protein resides in the membrane. The catalysed reaction is D-glucose 6-phosphate + NADP(+) = 6-phospho-D-glucono-1,5-lactone + NADPH + H(+). It participates in carbohydrate degradation; pentose phosphate pathway; D-ribulose 5-phosphate from D-glucose 6-phosphate (oxidative stage): step 1/3. Cytosolic glucose-6-phosphate dehydrogenase that catalyzes the first and rate-limiting step of the oxidative branch within the pentose phosphate pathway/shunt, an alternative route to glycolysis for the dissimilation of carbohydrates and a major source of reducing power and metabolic intermediates for fatty acid and nucleic acid biosynthetic processes. This chain is Glucose-6-phosphate 1-dehydrogenase (G6PD), found in Osphranter robustus (Wallaroo).